Reading from the N-terminus, the 488-residue chain is Bifunctional protein GlmU (488 aa).

A pyrophosphorylase region spans residues 1-237 (MPRTRTPLAA…AEEASGVNDR (237 aa)). UDP-N-acetyl-alpha-D-glucosamine is bound by residues 13–16 (LAAG), lysine 27, glutamine 82, 87–88 (GT), 110–112 (SGD), glycine 149, glutamate 164, asparagine 179, and asparagine 235. Aspartate 112 lines the Mg(2+) pocket. Position 235 (asparagine 235) interacts with Mg(2+). The interval 238–258 (VELSRANRVMVGRLAEAFMRA) is linker. An N-acetyltransferase region spans residues 259 to 488 (GVTIEDPARF…KGRPAARRAS (230 aa)). The UDP-N-acetyl-alpha-D-glucosamine site is built by arginine 341 and lysine 359. The active-site Proton acceptor is histidine 371. 2 residues coordinate UDP-N-acetyl-alpha-D-glucosamine: tyrosine 374 and asparagine 385. Acetyl-CoA contacts are provided by residues alanine 388, 394–395 (NY), serine 413, alanine 431, and arginine 448. The tract at residues 459 to 488 (AQRQAEKQMKGTATGPASARKGRPAARRAS) is disordered. Over residues 478 to 488 (RKGRPAARRAS) the composition is skewed to basic residues.

It in the N-terminal section; belongs to the N-acetylglucosamine-1-phosphate uridyltransferase family. This sequence in the C-terminal section; belongs to the transferase hexapeptide repeat family. Homotrimer. The cofactor is Mg(2+).

Its subcellular location is the cytoplasm. It carries out the reaction alpha-D-glucosamine 1-phosphate + acetyl-CoA = N-acetyl-alpha-D-glucosamine 1-phosphate + CoA + H(+). The enzyme catalyses N-acetyl-alpha-D-glucosamine 1-phosphate + UTP + H(+) = UDP-N-acetyl-alpha-D-glucosamine + diphosphate. The protein operates within nucleotide-sugar biosynthesis; UDP-N-acetyl-alpha-D-glucosamine biosynthesis; N-acetyl-alpha-D-glucosamine 1-phosphate from alpha-D-glucosamine 6-phosphate (route II): step 2/2. It functions in the pathway nucleotide-sugar biosynthesis; UDP-N-acetyl-alpha-D-glucosamine biosynthesis; UDP-N-acetyl-alpha-D-glucosamine from N-acetyl-alpha-D-glucosamine 1-phosphate: step 1/1. Its pathway is bacterial outer membrane biogenesis; LPS lipid A biosynthesis. Functionally, catalyzes the last two sequential reactions in the de novo biosynthetic pathway for UDP-N-acetylglucosamine (UDP-GlcNAc). The C-terminal domain catalyzes the transfer of acetyl group from acetyl coenzyme A to glucosamine-1-phosphate (GlcN-1-P) to produce N-acetylglucosamine-1-phosphate (GlcNAc-1-P), which is converted into UDP-GlcNAc by the transfer of uridine 5-monophosphate (from uridine 5-triphosphate), a reaction catalyzed by the N-terminal domain. The protein is Bifunctional protein GlmU of Anaeromyxobacter dehalogenans (strain 2CP-1 / ATCC BAA-258).